Reading from the N-terminus, the 124-residue chain is Large ribosomal subunit protein bL12 (124 aa).

Belongs to the bacterial ribosomal protein bL12 family. As to quaternary structure, homodimer. Part of the ribosomal stalk of the 50S ribosomal subunit. Forms a multimeric L10(L12)X complex, where L10 forms an elongated spine to which 2 to 4 L12 dimers bind in a sequential fashion. Binds GTP-bound translation factors.

Functionally, forms part of the ribosomal stalk which helps the ribosome interact with GTP-bound translation factors. Is thus essential for accurate translation. This is Large ribosomal subunit protein bL12 from Idiomarina loihiensis (strain ATCC BAA-735 / DSM 15497 / L2-TR).